A 60-amino-acid chain; its full sequence is Ribosome modulation factor (60 aa).

The protein belongs to the ribosome modulation factor family.

The protein localises to the cytoplasm. In terms of biological role, during stationary phase, converts 70S ribosomes to an inactive dimeric form (100S ribosomes). In Kangiella koreensis (strain DSM 16069 / JCM 12317 / KCTC 12182 / SW-125), this protein is Ribosome modulation factor.